We begin with the raw amino-acid sequence, 360 residues long: Protein NDRG2 (360 aa).

The disordered stretch occupies residues 324 to 360; sequence SRTASLSSEGNRSRSRTLSQSSESGGGPPAPLAEVTC.

Belongs to the NDRG family.

It is found in the cytoplasm. In terms of biological role, contributes to the regulation of the Wnt signaling pathway. Down-regulates CTNNB1-mediated transcriptional activation of target genes. May be involved in neuron differentiation. The polypeptide is Protein NDRG2 (ndrg2) (Xenopus laevis (African clawed frog)).